Consider the following 202-residue polypeptide: Ras-related protein ORAB-1 (202 aa).

GTP contacts are provided by residues Gly15–Cys23, Tyr33–Thr40, Asp63–Gln67, Asn121–Asp124, and Ser151–Lys153. The Effector region motif lies at Tyr37–Phe45. Residues Met173–Cys202 form a disordered region. A compositionally biased stretch (polar residues) spans Gly180 to Lys195. S-geranylgeranyl cysteine attachment occurs at residues Cys201 and Cys202.

Belongs to the small GTPase superfamily. Rab family.

The protein resides in the cell membrane. Its function is as follows. Protein transport. Probably involved in vesicular traffic. This chain is Ras-related protein ORAB-1, found in Diplobatis ommata (Ocellated electric ray).